The primary structure comprises 611 residues: Dihydroxy-acid dehydratase (611 aa).

Asp81 contacts Mg(2+). A [2Fe-2S] cluster-binding site is contributed by Cys122. Mg(2+) contacts are provided by Asp123 and Lys124. Lys124 is subject to N6-carboxylysine. A [2Fe-2S] cluster-binding site is contributed by Cys195. Position 491 (Glu491) interacts with Mg(2+). Residue Ser517 is the Proton acceptor of the active site.

Belongs to the IlvD/Edd family. Homodimer. Requires [2Fe-2S] cluster as cofactor. It depends on Mg(2+) as a cofactor.

The enzyme catalyses (2R)-2,3-dihydroxy-3-methylbutanoate = 3-methyl-2-oxobutanoate + H2O. It carries out the reaction (2R,3R)-2,3-dihydroxy-3-methylpentanoate = (S)-3-methyl-2-oxopentanoate + H2O. The protein operates within amino-acid biosynthesis; L-isoleucine biosynthesis; L-isoleucine from 2-oxobutanoate: step 3/4. Its pathway is amino-acid biosynthesis; L-valine biosynthesis; L-valine from pyruvate: step 3/4. Functionally, functions in the biosynthesis of branched-chain amino acids. Catalyzes the dehydration of (2R,3R)-2,3-dihydroxy-3-methylpentanoate (2,3-dihydroxy-3-methylvalerate) into 2-oxo-3-methylpentanoate (2-oxo-3-methylvalerate) and of (2R)-2,3-dihydroxy-3-methylbutanoate (2,3-dihydroxyisovalerate) into 2-oxo-3-methylbutanoate (2-oxoisovalerate), the penultimate precursor to L-isoleucine and L-valine, respectively. The protein is Dihydroxy-acid dehydratase of Histophilus somni (strain 2336) (Haemophilus somnus).